The sequence spans 373 residues: Phospho-N-acetylmuramoyl-pentapeptide-transferase (373 aa).

A run of 11 helical transmembrane segments spans residues 16 to 36, 46 to 66, 93 to 113, 120 to 140, 157 to 177, 185 to 205, 216 to 236, 242 to 262, 270 to 290, 298 to 318, and 350 to 369; these read WWTK…AASF, LLSL…SWGI, PTMG…FVSV, QLLA…FDDW, LLLQ…QHWI, LGIS…VFLA, LDGL…VQLM, GNPV…GFLM, VFMG…VAIL, LVMG…VWVF, and MVVR…GLLL.

Belongs to the glycosyltransferase 4 family. MraY subfamily. It depends on Mg(2+) as a cofactor.

The protein resides in the cell inner membrane. It carries out the reaction UDP-N-acetyl-alpha-D-muramoyl-L-alanyl-gamma-D-glutamyl-meso-2,6-diaminopimeloyl-D-alanyl-D-alanine + di-trans,octa-cis-undecaprenyl phosphate = di-trans,octa-cis-undecaprenyl diphospho-N-acetyl-alpha-D-muramoyl-L-alanyl-D-glutamyl-meso-2,6-diaminopimeloyl-D-alanyl-D-alanine + UMP. It functions in the pathway cell wall biogenesis; peptidoglycan biosynthesis. Catalyzes the initial step of the lipid cycle reactions in the biosynthesis of the cell wall peptidoglycan: transfers peptidoglycan precursor phospho-MurNAc-pentapeptide from UDP-MurNAc-pentapeptide onto the lipid carrier undecaprenyl phosphate, yielding undecaprenyl-pyrophosphoryl-MurNAc-pentapeptide, known as lipid I. This is Phospho-N-acetylmuramoyl-pentapeptide-transferase from Prochlorococcus marinus (strain MIT 9313).